A 119-amino-acid chain; its full sequence is Large ribosomal subunit protein bL19 (119 aa).

Belongs to the bacterial ribosomal protein bL19 family.

Its function is as follows. This protein is located at the 30S-50S ribosomal subunit interface and may play a role in the structure and function of the aminoacyl-tRNA binding site. This chain is Large ribosomal subunit protein bL19, found in Pseudoalteromonas atlantica (strain T6c / ATCC BAA-1087).